Reading from the N-terminus, the 407-residue chain is Argininosuccinate synthase (407 aa).

8 to 16 (AYSGGLDTT) is a binding site for ATP. Positions 86 and 91 each coordinate L-citrulline. Glycine 116 contacts ATP. The L-aspartate site is built by threonine 118, asparagine 122, and aspartate 123. Position 122 (asparagine 122) interacts with L-citrulline. Positions 126, 178, 187, 264, and 276 each coordinate L-citrulline.

Belongs to the argininosuccinate synthase family. Type 1 subfamily. Homotetramer.

The protein resides in the cytoplasm. The enzyme catalyses L-citrulline + L-aspartate + ATP = 2-(N(omega)-L-arginino)succinate + AMP + diphosphate + H(+). The protein operates within amino-acid biosynthesis; L-arginine biosynthesis; L-arginine from L-ornithine and carbamoyl phosphate: step 2/3. The chain is Argininosuccinate synthase from Lachnoclostridium phytofermentans (strain ATCC 700394 / DSM 18823 / ISDg) (Clostridium phytofermentans).